The sequence spans 570 residues: Glycine--tRNA ligase (570 aa).

Substrate contacts are provided by Arg99 and Glu165. ATP-binding positions include 197–199 (RNE), 207–212 (LRLREF), 324–325 (EC), and 443–446 (GIDR). 212 to 216 (FTQAE) is a binding site for substrate. A substrate-binding site is contributed by 439-443 (EPSFG).

It belongs to the class-II aminoacyl-tRNA synthetase family.

The protein resides in the cytoplasm. It carries out the reaction tRNA(Gly) + glycine + ATP = glycyl-tRNA(Gly) + AMP + diphosphate. Its function is as follows. Catalyzes the attachment of glycine to tRNA(Gly). The sequence is that of Glycine--tRNA ligase from Thermococcus kodakarensis (strain ATCC BAA-918 / JCM 12380 / KOD1) (Pyrococcus kodakaraensis (strain KOD1)).